Consider the following 266-residue polypeptide: Nickel import ATP-binding protein NikE (266 aa).

Residues 4 to 252 (ISADNIVKIY…RHPASRLLRE (249 aa)) enclose the ABC transporter domain. 45 to 52 (GRSGCGKS) is an ATP binding site.

It belongs to the ABC transporter superfamily. Nickel importer (TC 3.A.1.5.3) family. In terms of assembly, the complex is composed of two ATP-binding proteins (NikD and NikE), two transmembrane proteins (NikB and NikC) and a solute-binding protein (NikA).

The protein resides in the cell inner membrane. It carries out the reaction Ni(2+)(out) + ATP + H2O = Ni(2+)(in) + ADP + phosphate + H(+). In terms of biological role, part of the ABC transporter complex NikABCDE involved in nickel import. Responsible for energy coupling to the transport system. In Brucella abortus (strain 2308), this protein is Nickel import ATP-binding protein NikE.